We begin with the raw amino-acid sequence, 154 residues long: MSTSLAIVRLDPGLPLPSRAHEGDAGVDLYSAEDVRLEPGRRALVRTGVAVAIPFGMVGLVHPRSGLAARVGLSIVNSPGTIDAGYRGEIKVALINLDPAEPIVVHRGDRIAQLLVQRVELVELVEVSSFDEAGLAGTSRGDGGHGSSGGHASL.

Substrate-binding positions include 64 to 66, asparagine 77, 81 to 83, and lysine 91; these read RSG and TID.

The protein belongs to the dUTPase family. Homotrimer. The cofactor is Mg(2+).

It catalyses the reaction dUTP + H2O = dUMP + diphosphate + H(+). Its pathway is pyrimidine metabolism; dUMP biosynthesis; dUMP from dCTP (dUTP route): step 2/2. Its function is as follows. This enzyme is involved in nucleotide metabolism: it produces dUMP, the immediate precursor of thymidine nucleotides and it decreases the intracellular concentration of dUTP so that uracil cannot be incorporated into DNA. This chain is Deoxyuridine 5'-triphosphate nucleotidohydrolase, found in Mycobacterium avium (strain 104).